The primary structure comprises 25 residues: U11-ctenitoxin-Co1b (25 aa).

2 disulfide bridges follow: cysteine 4–cysteine 18 and cysteine 11–cysteine 22.

In terms of assembly, monomer. As to expression, expressed by the venom gland.

It is found in the secreted. In terms of biological role, neurotoxin. The protein is U11-ctenitoxin-Co1b of Ctenus ornatus (Brazilian spider).